Here is a 102-residue protein sequence, read N- to C-terminus: Large ribosomal subunit protein bL28 (102 aa).

Belongs to the bacterial ribosomal protein bL28 family.

This chain is Large ribosomal subunit protein bL28, found in Bradyrhizobium diazoefficiens (strain JCM 10833 / BCRC 13528 / IAM 13628 / NBRC 14792 / USDA 110).